Consider the following 348-residue polypeptide: MO25-like protein At2g03410 (348 aa).

The protein belongs to the Mo25 family.

The sequence is that of MO25-like protein At2g03410 from Arabidopsis thaliana (Mouse-ear cress).